The following is a 207-amino-acid chain: Holliday junction branch migration complex subunit RuvA (207 aa).

The interval methionine 1–serine 65 is domain I. Residues serine 66–isoleucine 144 form a domain II region. The interval alanine 145 to methionine 155 is flexible linker. Positions methionine 155–serine 207 are domain III.

Belongs to the RuvA family. As to quaternary structure, homotetramer. Forms an RuvA(8)-RuvB(12)-Holliday junction (HJ) complex. HJ DNA is sandwiched between 2 RuvA tetramers; dsDNA enters through RuvA and exits via RuvB. An RuvB hexamer assembles on each DNA strand where it exits the tetramer. Each RuvB hexamer is contacted by two RuvA subunits (via domain III) on 2 adjacent RuvB subunits; this complex drives branch migration. In the full resolvosome a probable DNA-RuvA(4)-RuvB(12)-RuvC(2) complex forms which resolves the HJ.

Its subcellular location is the cytoplasm. The RuvA-RuvB-RuvC complex processes Holliday junction (HJ) DNA during genetic recombination and DNA repair, while the RuvA-RuvB complex plays an important role in the rescue of blocked DNA replication forks via replication fork reversal (RFR). RuvA specifically binds to HJ cruciform DNA, conferring on it an open structure. The RuvB hexamer acts as an ATP-dependent pump, pulling dsDNA into and through the RuvAB complex. HJ branch migration allows RuvC to scan DNA until it finds its consensus sequence, where it cleaves and resolves the cruciform DNA. This is Holliday junction branch migration complex subunit RuvA from Chlamydia caviae (strain ATCC VR-813 / DSM 19441 / 03DC25 / GPIC) (Chlamydophila caviae).